Here is a 219-residue protein sequence, read N- to C-terminus: 7-cyano-7-deazaguanine synthase (219 aa).

10 to 20 (FSGGQDSTTCL) serves as a coordination point for ATP. Positions 188, 197, 200, and 203 each coordinate Zn(2+).

This sequence belongs to the QueC family. Homodimer. Requires Zn(2+) as cofactor.

It catalyses the reaction 7-carboxy-7-deazaguanine + NH4(+) + ATP = 7-cyano-7-deazaguanine + ADP + phosphate + H2O + H(+). Its pathway is purine metabolism; 7-cyano-7-deazaguanine biosynthesis. Its function is as follows. Catalyzes the ATP-dependent conversion of 7-carboxy-7-deazaguanine (CDG) to 7-cyano-7-deazaguanine (preQ(0)). The chain is 7-cyano-7-deazaguanine synthase from Clostridium botulinum (strain ATCC 19397 / Type A).